Here is a 550-residue protein sequence, read N- to C-terminus: Hydroxylamine reductase (550 aa).

Cysteine 3, cysteine 6, cysteine 18, and cysteine 25 together coordinate [2Fe-2S] cluster. Residues histidine 249, glutamate 273, cysteine 317, cysteine 405, cysteine 433, cysteine 458, glutamate 492, and lysine 494 each coordinate hybrid [4Fe-2O-2S] cluster. Cysteine persulfide is present on cysteine 405.

Belongs to the HCP family. [2Fe-2S] cluster is required as a cofactor. The cofactor is hybrid [4Fe-2O-2S] cluster.

It localises to the cytoplasm. The enzyme catalyses A + NH4(+) + H2O = hydroxylamine + AH2 + H(+). Its activity is regulated as follows. Inhibited by oxygen. Activated by cyanide except in the prolonged presence of excess cyanide, where the enzyme is inactivated. Catalyzes the reduction of hydroxylamine to form NH(3) and H(2)O. Is also able to reduce hydroxylamine analogs such as methylhydroxylamine and hydroxyquinone. Might have a role as a scavenger of potentially toxic by-products of nitrate metabolism. The polypeptide is Hydroxylamine reductase (Escherichia coli (strain K12)).